Consider the following 189-residue polypeptide: Putative transcription factor ovo-like protein 3 (189 aa).

The segment at 1-20 (MPRVFLVRSRRPQPPNWSHL) is disordered. 4 C2H2-type zinc fingers span residues 69-91 (LGCP…LKCH), 97-119 (HVCH…MRTH), 125-148 (FRCG…AKVH), and 164-186 (HVCE…RTLH).

The protein belongs to the krueppel C2H2-type zinc-finger protein family.

The protein localises to the nucleus. Its function is as follows. May act as a transcription regulator. This chain is Putative transcription factor ovo-like protein 3 (Ovol3), found in Mus musculus (Mouse).